We begin with the raw amino-acid sequence, 534 residues long: Blue-light-activated protein (534 aa).

Residues 20–93 enclose the PAS domain; it reads GKDIFFAAVE…QSIRDAIDQR (74 aa). Residue cysteine 70 is modified to S-4a-FMN cysteine. The PAC domain maps to 94–148; the sequence is VDISTEILNYRKDGSSFWNALFISPVYNDAGELIYFFASQLDISRRRDAEEALRQ. The 230-residue stretch at 161-390 folds into the Histidine kinase domain; the sequence is GIAHDFNNLL…TLRLYFPVDE (230 aa). Histidine 164 carries the post-translational modification Phosphohistidine; by autocatalysis. The 117-residue stretch at 411–527 folds into the Response regulatory domain; it reads RILIVEDRPD…DLARKVRQVL (117 aa). Aspartate 461 is subject to 4-aspartylphosphate.

In terms of processing, FMN binds covalently to cysteine after exposure to blue light and this bond is spontaneously broken in the dark.

It catalyses the reaction ATP + protein L-histidine = ADP + protein N-phospho-L-histidine.. In terms of biological role, photosensitive kinase and response regulator that is involved in increased bacterial virulence upon exposure to light. This chain is Blue-light-activated protein, found in Pseudomonas syringae pv. syringae (strain B728a).